The primary structure comprises 875 residues: Alanine--tRNA ligase (875 aa).

His-564, His-568, Cys-666, and His-670 together coordinate Zn(2+).

Belongs to the class-II aminoacyl-tRNA synthetase family. In terms of assembly, homotetramer. It depends on Zn(2+) as a cofactor.

It is found in the cytoplasm. The enzyme catalyses tRNA(Ala) + L-alanine + ATP = L-alanyl-tRNA(Ala) + AMP + diphosphate. Catalyzes the attachment of alanine to tRNA(Ala) in a two-step reaction: alanine is first activated by ATP to form Ala-AMP and then transferred to the acceptor end of tRNA(Ala). Also edits incorrectly charged Ser-tRNA(Ala) and Gly-tRNA(Ala) via its editing domain. The chain is Alanine--tRNA ligase from Serratia proteamaculans (strain 568).